The following is a 198-amino-acid chain: NADH-quinone oxidoreductase subunit C (198 aa).

The protein belongs to the complex I 30 kDa subunit family. In terms of assembly, NDH-1 is composed of 14 different subunits. Subunits NuoB, C, D, E, F, and G constitute the peripheral sector of the complex.

The protein resides in the cell inner membrane. It carries out the reaction a quinone + NADH + 5 H(+)(in) = a quinol + NAD(+) + 4 H(+)(out). Its function is as follows. NDH-1 shuttles electrons from NADH, via FMN and iron-sulfur (Fe-S) centers, to quinones in the respiratory chain. The immediate electron acceptor for the enzyme in this species is believed to be ubiquinone. Couples the redox reaction to proton translocation (for every two electrons transferred, four hydrogen ions are translocated across the cytoplasmic membrane), and thus conserves the redox energy in a proton gradient. The sequence is that of NADH-quinone oxidoreductase subunit C from Chromobacterium violaceum (strain ATCC 12472 / DSM 30191 / JCM 1249 / CCUG 213 / NBRC 12614 / NCIMB 9131 / NCTC 9757 / MK).